The following is a 182-amino-acid chain: Functional amyloid subunit FapB (182 aa).

The signal sequence occupies residues 1-18 (MTHSWLLLTVLGCSAAMA). One copy of the FapB_R1 repeat lies at 22–58 (NQALIDNAGKQYTGVLSVNQAAGNQHQQINSRAISLG). Residues 80 to 114 (SAAIQGSAFSNGNGILGVNQSAGANNQMINAVRIS) form a FapB_R2 repeat. The FapB_R3 repeat unit spans residues 150–180 (SDQAFTGSRGVVQVNQSAGVGNRMANTLGVT).

It belongs to the FapB/FapC family. In terms of assembly, forms fibrils in vitro; in the presence of FapA the fibrils are slightly narrower. A minor component of purified amyloid fibrils. Fibrils are resistant to boiling in 2% (weight/vol) SDS and require &gt;90% (vol/vol) formic acid to dissolve.

Its subcellular location is the fimbrium. The protein localises to the secreted. Functionally, a minor component of the functional amyloid in this bacterium. Probably nucleates fibril formation; FapB nucleates fibrillation its own, FapA inhibits FapB fibril elongation. Upon overexpression of the endogenous six-gene locus (fapA-fapF) in situ, cells form large clumps during liquid growth, make large amounts of biofilm and produce amyloid fibrils. Expression of the 6 gene operon in E.coli strain BL21(DE3) induces flocculation and biofilm formation with copious extracellular fibrils. The sequence is that of Functional amyloid subunit FapB from Pseudomonas fluorescens.